The chain runs to 136 residues: Ig heavy chain V region BCL1 (136 aa).

Residues 1 to 19 form the signal peptide; sequence MGWSCIIFFLVATATGVHS. The Ig-like domain maps to 20 to 135; it reads QVQLQQSGPE…WGQGTTLTVS (116 aa).

The polypeptide is Ig heavy chain V region BCL1 (Mus musculus (Mouse)).